Reading from the N-terminus, the 330-residue chain is Methionyl-tRNA formyltransferase (330 aa).

Residue 121-124 (SLLP) participates in (6S)-5,6,7,8-tetrahydrofolate binding.

The protein belongs to the Fmt family.

The enzyme catalyses L-methionyl-tRNA(fMet) + (6R)-10-formyltetrahydrofolate = N-formyl-L-methionyl-tRNA(fMet) + (6S)-5,6,7,8-tetrahydrofolate + H(+). Functionally, attaches a formyl group to the free amino group of methionyl-tRNA(fMet). The formyl group appears to play a dual role in the initiator identity of N-formylmethionyl-tRNA by promoting its recognition by IF2 and preventing the misappropriation of this tRNA by the elongation apparatus. The protein is Methionyl-tRNA formyltransferase of Burkholderia cenocepacia (strain ATCC BAA-245 / DSM 16553 / LMG 16656 / NCTC 13227 / J2315 / CF5610) (Burkholderia cepacia (strain J2315)).